The primary structure comprises 828 residues: MKMKQFNLLSLFLILITSFGSANSTIVSHDERAITIDGQRRILLSGSIHYPRSTSDMWPDLISKAKDGGLDTIETYVFWNAHEPSRRQYDFSGNLDLVRFIKTIQSAGLYSVLRIGPYVCAEWNYGGFPVWLHNMPDMKFRTINPGFMNEMQNFTTKIVNMMKEESLFASQGGPIILAQIENEYGNVISSYGAEGKAYIDWCANMANSLDIGVPWIMCQQPHAPQPMIETCNGFYCDQYKPSNPSSPKMWTENWTGWFKNWGGKHPYRTAEDLAFSVARFFQTGGTFQNYYMYHGGTNFGRVAGGPYITTSYDYDAPLDEYGNLNQPKWGHLKQLHTLLKSMEKPLTYGNISTIDLGNSVTATVYSTNEKSSCFIGNVNATADALVNFKGKDYNVPAWSVSVLPDCDKEAYNTARVNTQTSIITEDSCDEPEKLKWTWRPEFTTQKTILKGSGDLIAKGLVDQKDVTNDASDYLWYMTRVHLDKKDPIWSRNMSLRVHSNAHVLHAYVNGKYVGNQIVRDNKFDYRFEKKVNLVHGTNHLALLSVSVGLQNYGPFFESGPTGINGPVKLVGYKGDETIEKDLSKHQWDYKIGLNGFNHKLFSMKSAGHHHRKWSTEKLPADRMLSWYKANFKAPLGKDPVIVDLNGLGKGEVWINGQSIGRYWPSFNSSDEGCTEECDYRGEYGSDKCAFMCGKPTQRWYHVPRSFLNDKGHNTITLFEEMGGDPSMVKFKTVVTGRVCAKAHEHNKVELSCNNRPISAVKFASFGNPSGQCGSFAAGSCEGAKDAVKVVAKECVGKLNCTMNVSSHKFGSNLDCGDSPKRLFVEVEC.

An N-terminal signal peptide occupies residues 1–20 (MKMKQFNLLSLFLILITSFG). Residues Asn-23 and Asn-153 are each glycosylated (N-linked (GlcNAc...) asparagine). Glu-183 (proton donor) is an active-site residue. Glu-252 acts as the Nucleophile in catalysis. Residues Asn-253, Asn-350, Asn-379, Asn-492, Asn-667, Asn-799, and Asn-803 are each glycosylated (N-linked (GlcNAc...) asparagine). The 87-residue stretch at 742 to 828 (AHEHNKVELS…PKRLFVEVEC (87 aa)) folds into the SUEL-type lectin domain.

It belongs to the glycosyl hydrolase 35 family.

It is found in the secreted. The protein localises to the extracellular space. Its subcellular location is the apoplast. The catalysed reaction is Hydrolysis of terminal non-reducing beta-D-galactose residues in beta-D-galactosides.. The chain is Beta-galactosidase from Brassica oleracea (Wild cabbage).